The primary structure comprises 312 residues: Glycerol-3-phosphate dehydrogenase [NAD(P)+] (312 aa).

4 residues coordinate NADPH: Trp-11, Arg-30, Arg-31, and Lys-95. Sn-glycerol 3-phosphate is bound by residues Lys-95, Gly-123, and Ser-125. Residue Ala-127 participates in NADPH binding. Residues Lys-177, Asp-230, Ser-240, Arg-241, and Asn-242 each coordinate sn-glycerol 3-phosphate. Residue Lys-177 is the Proton acceptor of the active site. Arg-241 is an NADPH binding site. NADPH is bound by residues Val-265 and Glu-267.

The protein belongs to the NAD-dependent glycerol-3-phosphate dehydrogenase family.

Its subcellular location is the cytoplasm. It catalyses the reaction sn-glycerol 3-phosphate + NAD(+) = dihydroxyacetone phosphate + NADH + H(+). It carries out the reaction sn-glycerol 3-phosphate + NADP(+) = dihydroxyacetone phosphate + NADPH + H(+). The protein operates within membrane lipid metabolism; glycerophospholipid metabolism. Its function is as follows. Catalyzes the reduction of the glycolytic intermediate dihydroxyacetone phosphate (DHAP) to sn-glycerol 3-phosphate (G3P), the key precursor for phospholipid synthesis. This Helicobacter pylori (strain HPAG1) protein is Glycerol-3-phosphate dehydrogenase [NAD(P)+].